The chain runs to 378 residues: Leukocyte elastase inhibitor (378 aa).

At M1 the chain carries N-acetylmethionine. K137 is modified (N6-acetyllysine). S299 is subject to Phosphoserine. The CARD-binding motif (CBM) stretch occupies residues 350–378 (DFIADHPFIFFIRHNPSSNILFLGRLSSP).

This sequence belongs to the serpin family. Ov-serpin subfamily. As to quaternary structure, monomer. Interacts (via C-terminus) with CASP1; CASP4 (via CARD domain) and CASP5; these interactions regulate the activity of inflammatory caspases. Interacts with PRTN3. Interacts with GZMH.

It is found in the secreted. The protein resides in the cytoplasm. The protein localises to the cytolytic granule. Its subcellular location is the early endosome. Its function is as follows. Neutrophil serine protease inhibitor that plays an essential role in the regulation of the innate immune response, inflammation and cellular homeostasis. Acts primarily to protect the cell from proteases released in the cytoplasm during stress or infection. These proteases are important in killing microbes but when released from granules, these potent enzymes also destroy host proteins and contribute to mortality. Regulates the activity of the neutrophil proteases elastase, cathepsin G, proteinase-3, chymase, chymotrypsin, and kallikrein-3. Also acts as a potent intracellular inhibitor of GZMH by directly blocking its proteolytic activity. During inflammation, limits the activity of inflammatory caspases CASP1, CASP4 and CASP5 by suppressing their caspase-recruitment domain (CARD) oligomerization and enzymatic activation. When secreted, promotes the proliferation of beta-cells via its protease inhibitory function. Functionally, may be cleaved leading to a loss of its anti-protease activity and to the appearance of an endonuclease activity. However no catalytic site was identified. This Sus scrofa (Pig) protein is Leukocyte elastase inhibitor (SERPINB1).